The chain runs to 344 residues: Membrane progestin receptor delta (344 aa).

Residues 1-51 (MLSLKLPQLLQVHQVPRVFWEDGIMSGYRRPTSSALDCVLSSFQMTNETVN) are Cytoplasmic-facing. The helical transmembrane segment at 52 to 72 (IWTHFLPTWYFLWRLLALAGG) threads the bilayer. At 73 to 83 (PGFRAEPYHWP) the chain is on the extracellular side. A helical membrane pass occupies residues 84-104 (LLVFLLPACLYPFASCCAHTF). The Cytoplasmic segment spans residues 105-113 (SSMSPRMRH). Residues 114–134 (ICYFLDYGALSLYSLGCAFPY) form a helical membrane-spanning segment. The Extracellular segment spans residues 135 to 147 (AAYSMPASWLHGH). A helical transmembrane segment spans residues 148 to 168 (LHQFFVPAAALNSFLCTGLSC). Residues 169-217 (YSRFLELESPGLSKVLRTGAFAYPFLFDNLPLFYRLGLCWGRGHGCGQE) are Cytoplasmic-facing. Residues 218–238 (ALSTSHGYHLFCALLTGFLFA) traverse the membrane as a helical segment. The Extracellular segment spans residues 239-258 (SHLPERLAPGRFDYIGHSHQ). A helical transmembrane segment spans residues 259–279 (LFHICAVLGTHFQLEAVLADM). Residues 280 to 292 (GSRRAWLATQEPA) lie on the Cytoplasmic side of the membrane. The chain crosses the membrane as a helical span at residues 293–313 (LGLAGTVATLVLAAAGNLLII). Residues 314-344 (AAFTATLLRAPSTCPLLQGGPLEGGTQAKQQ) are Extracellular-facing.

The protein belongs to the ADIPOR family. As to quaternary structure, homodimer. Brain specific. Highly expressed in the hypothalamus, also expressed in forebrain, amygdala, corpus callosum and spinal cord.

The protein localises to the cell membrane. Its function is as follows. Plasma membrane progesterone (P4) receptor coupled to G proteins. Seems to act through a G(s) mediated pathway. Involved in neurosteroid inhibition of apoptosis. May be involved in regulating rapid P4 signaling in the nervous system. Also binds dehydroepiandrosterone (DHEA), pregnanolone, pregnenolone and allopregnanolone. The sequence is that of Membrane progestin receptor delta from Homo sapiens (Human).